The sequence spans 264 residues: ATP synthase subunit a (264 aa).

Transmembrane regions (helical) follow at residues 29 to 49 (TWHI…LWIF), 87 to 107 (NALI…MNFM), 134 to 154 (DLNI…YYSI), 177 to 197 (IPVN…SLAL), 208 to 228 (LIFI…SLGV), and 235 to 255 (LIFH…LTIV).

It belongs to the ATPase A chain family. As to quaternary structure, F-type ATPases have 2 components, CF(1) - the catalytic core - and CF(0) - the membrane proton channel. CF(1) has five subunits: alpha(3), beta(3), gamma(1), delta(1), epsilon(1). CF(0) has three main subunits: a(1), b(2) and c(9-12). The alpha and beta chains form an alternating ring which encloses part of the gamma chain. CF(1) is attached to CF(0) by a central stalk formed by the gamma and epsilon chains, while a peripheral stalk is formed by the delta and b chains.

Its subcellular location is the cell inner membrane. Its function is as follows. Key component of the proton channel; it plays a direct role in the translocation of protons across the membrane. The polypeptide is ATP synthase subunit a (Shewanella amazonensis (strain ATCC BAA-1098 / SB2B)).